Consider the following 312-residue polypeptide: Ribonuclease Z (312 aa).

Residues histidine 63, histidine 65, aspartate 67, histidine 68, histidine 141, aspartate 212, and histidine 270 each coordinate Zn(2+). Residue aspartate 67 is the Proton acceptor of the active site.

This sequence belongs to the RNase Z family. In terms of assembly, homodimer. Requires Zn(2+) as cofactor.

The catalysed reaction is Endonucleolytic cleavage of RNA, removing extra 3' nucleotides from tRNA precursor, generating 3' termini of tRNAs. A 3'-hydroxy group is left at the tRNA terminus and a 5'-phosphoryl group is left at the trailer molecule.. In terms of biological role, zinc phosphodiesterase, which displays some tRNA 3'-processing endonuclease activity. Probably involved in tRNA maturation, by removing a 3'-trailer from precursor tRNA. This Lactobacillus acidophilus (strain ATCC 700396 / NCK56 / N2 / NCFM) protein is Ribonuclease Z.